We begin with the raw amino-acid sequence, 662 residues long: Probable quinol oxidase subunit 1 (662 aa).

Transmembrane regions (helical) follow at residues 14-34 (WMIT…IAVI) and 58-78 (VMYL…ALLI). Position 102 (His-102) interacts with Fe(II)-heme a. 8 helical membrane passes run 103–123 (GVIM…NIVV), 140–160 (VSFW…IIGG), 187–207 (IAIQ…FVTI), 228–248 (FITT…LALM), 273–293 (FFWV…FGIY), 311–331 (MVWA…HHFF), 336–356 (GALI…PTGV), and 376–396 (MLFS…GVML). Positions 279, 283, 328, and 329 each coordinate Cu cation. Residues 279 to 283 (HPEVY) constitute a cross-link (1'-histidyl-3'-tyrosine (His-Tyr)). His-414 contacts heme a3. Helical transmembrane passes span 415–435 (FHYT…IFWY), 451–471 (CFWF…ILGL), 493–513 (ISTI…VSIV), 587–604 (PVGF…FFLI), and 608–627 (VIPA…YRSF). Residue His-416 coordinates Fe(II)-heme a.

It belongs to the heme-copper respiratory oxidase family. Requires Cu cation as cofactor. Ferriheme a serves as cofactor. It depends on Heme A3. as a cofactor.

It is found in the cell membrane. The enzyme catalyses 2 a quinol + O2 = 2 a quinone + 2 H2O. Its pathway is energy metabolism; oxidative phosphorylation. Catalyzes quinol oxidation with the concomitant reduction of oxygen to water. In Staphylococcus aureus (strain COL), this protein is Probable quinol oxidase subunit 1 (qoxB).